A 146-amino-acid polypeptide reads, in one-letter code: Late protein H7 (146 aa).

The helical transmembrane segment at 10-32 (LAMTAFFGELNTLDIMALIMSIF) threads the bilayer.

Belongs to the chordopoxvirinae H7 family.

Its subcellular location is the membrane. Contributes to the formation of crescents and immature virions (IV). In Vaccinia virus (strain Tian Tan) (VACV), this protein is Late protein H7.